We begin with the raw amino-acid sequence, 357 residues long: Hypersensitivity response secretion protein HrcU (357 aa).

The disordered stretch occupies residues 1 to 21 (MSDEKTEQPTDKKLEDAHRDG). A run of 5 helical transmembrane segments spans residues 29-49 (LTAA…ASVF), 84-104 (LVLM…IATW), 149-169 (VAVA…IVGA), 180-200 (IGMT…LILG), and 323-343 (LYGP…AWVG).

The protein belongs to the type III secretion exporter family.

It is found in the cell membrane. Its function is as follows. Involved in the secretion of PopA, a proteinaceous elicitor of the hypersensitivity response in plants. This Ralstonia nicotianae (strain ATCC BAA-1114 / GMI1000) (Ralstonia solanacearum) protein is Hypersensitivity response secretion protein HrcU (hrcU).